Reading from the N-terminus, the 702-residue chain is Soluble guanylate cyclase gcy-31 (702 aa).

Position 104 (His-104) interacts with heme. A coiled-coil region spans residues 368 to 406 (TQQSAELKLLLHQEAQKSRNMRENMNRLKKERRRTDKLL). The 130-residue stretch at 435–564 (TILFTDIVEF…ETVYVANKME (130 aa)) folds into the Guanylate cyclase domain. Asp-440 and Asp-484 together coordinate Mg(2+). The segment at 614-702 (RHGPHRVPSP…QDLTPRKSIT (89 aa)) is disordered. Residues 633-643 (SQTEDDDDDEL) show a composition bias toward acidic residues. Residues 683 to 695 (RNSNKTPRQSQDL) are compositionally biased toward polar residues.

The protein belongs to the adenylyl cyclase class-4/guanylyl cyclase family. Heterodimer; with other soluble guanylate cyclases. The cofactor is heme. As to expression, expressed in a pair of bilaterally symmetric neurons in the head.

It is found in the cytoplasm. It catalyses the reaction GTP = 3',5'-cyclic GMP + diphosphate. Its activity is regulated as follows. May be regulated by molecular oxygen. Probably not activated by nitric oxide (NO). Its function is as follows. Synthesizes cyclic GMP (cGMP) from GTP. May play a role in embryogenesis. This chain is Soluble guanylate cyclase gcy-31 (gcy-31), found in Caenorhabditis elegans.